Reading from the N-terminus, the 502-residue chain is Arginine-specific demethylase JMJ22 (502 aa).

The tract at residues 15–45 (KSKSKRLKLHQHEPESLFPEKEVEEEDEDEG) is disordered. Basic and acidic residues predominate over residues 24 to 35 (HQHEPESLFPEK). The F-box domain occupies 80–126 (LGNLQILSDELVLDILGLLGANHLGVLATVTKSFYIFANHEPLWRNL). One can recognise a JmjC domain in the interval 279-439 (EKVPVLDSEY…NVLEFLKKPN (161 aa)). Residues histidine 324, aspartate 326, and histidine 407 each coordinate Fe cation.

The protein belongs to the JARID1 histone demethylase family. The cofactor is Fe(2+). As to expression, expressed in inflorescences, roots and siliques, and, at low levels, in leaves and stems.

The protein localises to the nucleus. The catalysed reaction is N(omega),N(omega)-dimethyl-L-arginyl-[protein] + 2-oxoglutarate + O2 = N(omega)-methyl-L-arginyl-[protein] + formaldehyde + succinate + CO2. Its function is as follows. Histone demethylase that demethylates 'Arg-3' (H4R3me) of histone H4 with a specific activity for H4R3me2. Involved in the positive regulation of gene expression. Together with JMJ20, positively regulates seed germination by promoting the removal of repressive histone arginine methylations (e.g. H4R3me2) at GA3ox1 and GA3ox2 to trigger gibberellic acid (GA) biosynthesis. The protein is Arginine-specific demethylase JMJ22 of Arabidopsis thaliana (Mouse-ear cress).